Reading from the N-terminus, the 478-residue chain is Cytochrome c-552 (478 aa).

A signal peptide spans 1 to 26; the sequence is MARKTLRARRFFSLIFPFFFITSVYA. Residue histidine 94 coordinates heme c. Positions 122, 125, and 126 each coordinate heme. Positions 160, 163, 164, 209, 212, and 213 each coordinate heme c. Ca(2+) is bound by residues glutamate 215, tyrosine 216, lysine 261, and glutamine 263. Tyrosine 216 provides a ligand contact to substrate. Residue histidine 264 coordinates substrate. Heme c is bound by residues histidine 275, cysteine 282, cysteine 285, histidine 286, histidine 301, cysteine 314, cysteine 317, histidine 318, and histidine 393.

It belongs to the cytochrome c-552 family. The cofactor is Ca(2+). Requires heme c as cofactor.

The protein resides in the periplasm. The catalysed reaction is 6 Fe(III)-[cytochrome c] + NH4(+) + 2 H2O = 6 Fe(II)-[cytochrome c] + nitrite + 8 H(+). It participates in nitrogen metabolism; nitrate reduction (assimilation). Catalyzes the reduction of nitrite to ammonia, consuming six electrons in the process. The protein is Cytochrome c-552 of Salmonella gallinarum (strain 287/91 / NCTC 13346).